Consider the following 274-residue polypeptide: 4-hydroxy-3-methylbut-2-enyl diphosphate reductase (274 aa).

[4Fe-4S] cluster is bound at residue cysteine 12. Residues histidine 36 and histidine 70 each contribute to the (2E)-4-hydroxy-3-methylbut-2-enyl diphosphate site. Residues histidine 36 and histidine 70 each contribute to the dimethylallyl diphosphate site. Isopentenyl diphosphate-binding residues include histidine 36 and histidine 70. Cysteine 92 serves as a coordination point for [4Fe-4S] cluster. Histidine 120 provides a ligand contact to (2E)-4-hydroxy-3-methylbut-2-enyl diphosphate. Histidine 120 provides a ligand contact to dimethylallyl diphosphate. Histidine 120 contacts isopentenyl diphosphate. Glutamate 122 (proton donor) is an active-site residue. Threonine 158 contacts (2E)-4-hydroxy-3-methylbut-2-enyl diphosphate. Cysteine 186 lines the [4Fe-4S] cluster pocket. (2E)-4-hydroxy-3-methylbut-2-enyl diphosphate is bound by residues serine 214, serine 215, asparagine 216, and serine 258. Serine 214, serine 215, asparagine 216, and serine 258 together coordinate dimethylallyl diphosphate. Isopentenyl diphosphate is bound by residues serine 214, serine 215, asparagine 216, and serine 258.

This sequence belongs to the IspH family. Requires [4Fe-4S] cluster as cofactor.

It carries out the reaction isopentenyl diphosphate + 2 oxidized [2Fe-2S]-[ferredoxin] + H2O = (2E)-4-hydroxy-3-methylbut-2-enyl diphosphate + 2 reduced [2Fe-2S]-[ferredoxin] + 2 H(+). The enzyme catalyses dimethylallyl diphosphate + 2 oxidized [2Fe-2S]-[ferredoxin] + H2O = (2E)-4-hydroxy-3-methylbut-2-enyl diphosphate + 2 reduced [2Fe-2S]-[ferredoxin] + 2 H(+). The protein operates within isoprenoid biosynthesis; dimethylallyl diphosphate biosynthesis; dimethylallyl diphosphate from (2E)-4-hydroxy-3-methylbutenyl diphosphate: step 1/1. It functions in the pathway isoprenoid biosynthesis; isopentenyl diphosphate biosynthesis via DXP pathway; isopentenyl diphosphate from 1-deoxy-D-xylulose 5-phosphate: step 6/6. Functionally, catalyzes the conversion of 1-hydroxy-2-methyl-2-(E)-butenyl 4-diphosphate (HMBPP) into a mixture of isopentenyl diphosphate (IPP) and dimethylallyl diphosphate (DMAPP). Acts in the terminal step of the DOXP/MEP pathway for isoprenoid precursor biosynthesis. The chain is 4-hydroxy-3-methylbut-2-enyl diphosphate reductase from Helicobacter pylori (strain Shi470).